Reading from the N-terminus, the 284-residue chain is Diaminopimelate epimerase (284 aa).

The substrate site is built by Asn21, Gln54, and Asn74. Residue Cys83 is the Proton donor of the active site. Residues 84-85 (GN), Asn167, Asn200, and 218-219 (ER) each bind substrate. The Proton acceptor role is filled by Cys227. 228 to 229 (GS) contacts substrate.

The protein belongs to the diaminopimelate epimerase family. Homodimer.

It is found in the cytoplasm. It catalyses the reaction (2S,6S)-2,6-diaminopimelate = meso-2,6-diaminopimelate. The protein operates within amino-acid biosynthesis; L-lysine biosynthesis via DAP pathway; DL-2,6-diaminopimelate from LL-2,6-diaminopimelate: step 1/1. Functionally, catalyzes the stereoinversion of LL-2,6-diaminopimelate (L,L-DAP) to meso-diaminopimelate (meso-DAP), a precursor of L-lysine and an essential component of the bacterial peptidoglycan. The chain is Diaminopimelate epimerase from Buchnera aphidicola subsp. Acyrthosiphon pisum (strain APS) (Acyrthosiphon pisum symbiotic bacterium).